We begin with the raw amino-acid sequence, 279 residues long: UPF0276 protein SO_2008 (279 aa).

The protein belongs to the UPF0276 family.

In Shewanella oneidensis (strain ATCC 700550 / JCM 31522 / CIP 106686 / LMG 19005 / NCIMB 14063 / MR-1), this protein is UPF0276 protein SO_2008.